The following is a 475-amino-acid chain: D(1B) dopamine receptor (475 aa).

At 1-38 (MLPPGRNRTAQPARLGLQRQLAQVDAPAGSATPLGPAQ) the chain is on the extracellular side. N-linked (GlcNAc...) asparagine glycosylation occurs at Asn-7. Residues 39 to 64 (VVTAGLLTLLIVWTLLGNVLVCAAIV) form a helical membrane-spanning segment. Topologically, residues 65-75 (RSRHLRAKMTN) are cytoplasmic. The helical transmembrane segment at 76–102 (IFIVSLAVSDLFVALLVMPWKAVAEVA) threads the bilayer. Topologically, residues 103–111 (GYWPFGTFC) are extracellular. Cysteines 111 and 211 form a disulfide. The chain crosses the membrane as a helical span at residues 112–134 (DIWVAFDIMCSTASILNLCIISV). Topologically, residues 135–153 (DRYWAISRPFRYERKMTQR) are cytoplasmic. The chain crosses the membrane as a helical span at residues 154 to 179 (VALVMVGLAWTLSILISFIPVQLNWH). At 180-215 (RDKAGSQGQEGLLSNGTPWEEGWELEGRTENCDSSL) the chain is on the extracellular side. A helical membrane pass occupies residues 216–240 (NRTYAISSSLISFYIPVAIMIVTYT). Residues 241-289 (RIYRIAQVQIRRISSLERAAEHAQSCRSRGAYEPDPSLRASIKKETKVF) lie on the Cytoplasmic side of the membrane. Residues 290-317 (KTLSMIMGVFVCCWLPFFILNCMVPFCS) form a helical membrane-spanning segment. Residues 318–335 (SGDAEGPKTGFPCVSETT) lie on the Extracellular side of the membrane. The helical transmembrane segment at 336 to 357 (FDIFVWFGWANSSLNPIIYAFN) threads the bilayer. Residues 358 to 475 (ADFRKVFAQL…LTPNCFDKTA (118 aa)) are Cytoplasmic-facing. Cys-370 carries S-palmitoyl cysteine lipidation. Residues 415–443 (SGDREVGEEEEEGPFDHMSQISPTTPDGD) are disordered.

This sequence belongs to the G-protein coupled receptor 1 family. As to expression, brain, in the lateral mammillary nuclei, the anterior pretectal nuclei, and several layers of the hippocampus.

Its subcellular location is the cell membrane. Dopamine receptor whose activity is mediated by G proteins which activate adenylyl cyclase. The sequence is that of D(1B) dopamine receptor (Drd5) from Rattus norvegicus (Rat).